Reading from the N-terminus, the 1771-residue chain is Replicase polyprotein (1771 aa).

Positions 1–29 form a coiled coil; sequence MSFQQTNNNATNNINSLEELAAQELIAAQ. A BC-box region spans residues 16 to 25; that stretch reads SLEELAAQEL. Residues 106–114 are interaction with and inhibition of host AGO2; the sequence is PEHRYGSTF. In terms of domain architecture, SF3 helicase spans 482 to 656; it reads AKSLYEQVLL…QEKSIWVRNA (175 aa). 510-517 serves as a coordination point for ATP; it reads GESGIGKT. Positions 919 to 942 are disordered; it reads VEVGSSGDSKTQKQRNTKVEVGKE. Positions 954 to 1201 constitute a Peptidase C3 domain; the sequence is DPAAHALVLD…YACPLTQEAI (248 aa). Residues His-1003, Asp-1063, and Cys-1162 each act as for picornain 3C-like protease activity in the active site. Residues 1385-1413 are a coiled coil; sequence GEQYDFTSQRAQELRRDVEELIDNCAKGI. In terms of domain architecture, RdRp catalytic spans 1495-1634; that stretch reads NKVIAGDFGN…NISDRVVEWF (140 aa).

In terms of assembly, interacts with host AGO2; this interaction leads to AGO2 degradation via an E3 ubiquitin ligase-dependent pathway and may block the RNA-induced silencing complexes (RISC) activity. In terms of processing, might be expressed through a ribosomal skip from one codon to the next without formation of a peptide bond.

Its subcellular location is the host cytoplasm. It localises to the host perinuclear region. It carries out the reaction RNA(n) + a ribonucleoside 5'-triphosphate = RNA(n+1) + diphosphate. Its function is as follows. Suppressor of RNA-mediated gene silencing, an antiviral defense mechanism of insect cells. Inhibits siRNA function through the direct enzymatic inactivation of host AGO2, but does not interfere with miRNA pathway. Facilitates viral replication via the recruitment of a cellular ubiquitin ligase complex that promotes host AGO2 degradation. Inhibits the integrated stress response (ISR) in the infected cell possiby by degrading host Nup358. Stress granule formation is thus inhibited, which allows protein synthesis and viral replication. Does not bind to dsRNA or siRNA. Replicates the genomic and antigenomic RNA. This Teleogryllus oceanicus (black field cricket) protein is Replicase polyprotein.